The following is a 397-amino-acid chain: Anhydro-N-acetylmuramic acid kinase (397 aa).

21–28 serves as a coordination point for ATP; the sequence is GTSLDGVD. The segment covering 373 to 384 has biased composition (polar residues); that stretch reads TPTNLPSVTGAS. A disordered region spans residues 373–397; the sequence is TPTNLPSVTGASARTPLGSLSVPGP.

Belongs to the anhydro-N-acetylmuramic acid kinase family.

The enzyme catalyses 1,6-anhydro-N-acetyl-beta-muramate + ATP + H2O = N-acetyl-D-muramate 6-phosphate + ADP + H(+). It participates in amino-sugar metabolism; 1,6-anhydro-N-acetylmuramate degradation. Its pathway is cell wall biogenesis; peptidoglycan recycling. Its function is as follows. Catalyzes the specific phosphorylation of 1,6-anhydro-N-acetylmuramic acid (anhMurNAc) with the simultaneous cleavage of the 1,6-anhydro ring, generating MurNAc-6-P. Is required for the utilization of anhMurNAc either imported from the medium or derived from its own cell wall murein, and thus plays a role in cell wall recycling. This is Anhydro-N-acetylmuramic acid kinase from Salinibacter ruber (strain DSM 13855 / M31).